The primary structure comprises 149 residues: Small ribosomal subunit protein uS19w (149 aa).

The protein belongs to the universal ribosomal protein uS19 family.

The protein resides in the cytoplasm. The chain is Small ribosomal subunit protein uS19w (RPS15E) from Arabidopsis thaliana (Mouse-ear cress).